We begin with the raw amino-acid sequence, 1217 residues long: Disease resistance protein RPS4 (1217 aa).

The 162-residue stretch at 14–175 (PQHQVFINFR…EIVKAVKTAL (162 aa)) folds into the TIR domain. The active site involves Glu88. One can recognise an NB-ARC domain in the interval 211–472 (EQRLKDLEEK…FRSQDKDYVE (262 aa)). LRR repeat units lie at residues 260-285 (HALI…LLGE), 436-459 (PNIV…AFLD), 614-636 (LKEV…DFNP), 637-659 (INLV…DKDT), 682-706 (AEKL…MKKM), 708-728 (MLAF…EMNL), 729-749 (ISLK…PLIS), 750-774 (DNIE…KLQR), 796-818 (LKAL…EIDI), 819-842 (SFLN…SVQY), and 861-887 (LSQL…NLQC). The disordered stretch occupies residues 1162-1195 (TEGVDGRVKKKKKTRMDNGRPKKKQRSGRDDNQT). A Nuclear localization signal motif is present at residues 1170-1177 (KKKKKTRM).

As to quaternary structure, interacts with EDS1.

It localises to the nucleus. It catalyses the reaction NAD(+) + H2O = ADP-D-ribose + nicotinamide + H(+). In terms of biological role, disease resistance (R) protein that specifically recognizes the AvrRps4 type III effector avirulence protein from Pseudomonas syringae. Resistance proteins guard the plant against pathogens that contain an appropriate avirulence protein via an indirect interaction with this avirulence protein. That triggers a defense system including the hypersensitive response, which restricts the pathogen growth. The combined presence of both regular and alternative RPS4 transcripts with truncated open reading frames (ORFs) is necessary for function. RPS4 function is regulated at multiple levels, including gene expression, alternative splicing, and protein stability. Acts as a disease resistance protein involved in resistance to fungal and bacterial pathogens, including R.solanacearum, P.syringae pv. tomato and C.higginsianum. In presence of RRS1, elicites an EDS1-dependent hypersensitive response. This Arabidopsis thaliana (Mouse-ear cress) protein is Disease resistance protein RPS4.